Reading from the N-terminus, the 259-residue chain is uncharacterized protein (259 aa).

This is an uncharacterized protein from Aquifex aeolicus (strain VF5).